The sequence spans 316 residues: Putative ubiquitin-conjugating enzyme E2 39 (316 aa).

The region spanning 57–217 is the UBC core domain; the sequence is NWVKDIQKEW…VFVFSLKTMH (161 aa). The active-site Glycyl thioester intermediate is Cys143.

It belongs to the ubiquitin-conjugating enzyme family.

The catalysed reaction is S-ubiquitinyl-[E1 ubiquitin-activating enzyme]-L-cysteine + [E2 ubiquitin-conjugating enzyme]-L-cysteine = [E1 ubiquitin-activating enzyme]-L-cysteine + S-ubiquitinyl-[E2 ubiquitin-conjugating enzyme]-L-cysteine.. The protein operates within protein modification; protein ubiquitination. Accepts the ubiquitin from the E1 complex and catalyzes its covalent attachment to other proteins. The polypeptide is Putative ubiquitin-conjugating enzyme E2 39 (UBC39) (Arabidopsis thaliana (Mouse-ear cress)).